Consider the following 268-residue polypeptide: Shikimate dehydrogenase (NADP(+)) (268 aa).

Residues serine 13–serine 15 and threonine 60 contribute to the shikimate site. The active-site Proton acceptor is lysine 64. Glutamate 76 lines the NADP(+) pocket. The shikimate site is built by asparagine 85 and aspartate 100. NADP(+) is bound by residues glycine 124 to alanine 128, asparagine 148 to arginine 153, and isoleucine 209. Tyrosine 211 contributes to the shikimate binding site. Residue glycine 232 coordinates NADP(+).

This sequence belongs to the shikimate dehydrogenase family. Homodimer.

The catalysed reaction is shikimate + NADP(+) = 3-dehydroshikimate + NADPH + H(+). The protein operates within metabolic intermediate biosynthesis; chorismate biosynthesis; chorismate from D-erythrose 4-phosphate and phosphoenolpyruvate: step 4/7. Its function is as follows. Involved in the biosynthesis of the chorismate, which leads to the biosynthesis of aromatic amino acids. Catalyzes the reversible NADPH linked reduction of 3-dehydroshikimate (DHSA) to yield shikimate (SA). The polypeptide is Shikimate dehydrogenase (NADP(+)) (Staphylococcus aureus (strain USA300)).